The primary structure comprises 42 residues: Potassium channel gamma toxin gamma-KTx 1.9 (42 aa).

4 disulfide bridges follow: C5–C23, C11–C34, C20–C39, and C24–C41.

It belongs to the ergtoxin family. Gamma-KTx 1 subfamily. In terms of tissue distribution, expressed by the venom gland.

It localises to the secreted. In terms of biological role, blocks human voltage-gated potassium channel Kv11.1/KCNH2/ERG1 (IC(50)=16.9 nM). This Centruroides tecomanus (Scorpion) protein is Potassium channel gamma toxin gamma-KTx 1.9.